Consider the following 132-residue polypeptide: Protein NrdI (132 aa).

It belongs to the NrdI family.

Functionally, probably involved in ribonucleotide reductase function. The polypeptide is Protein NrdI (Bartonella tribocorum (strain CIP 105476 / IBS 506)).